A 533-amino-acid chain; its full sequence is Pre-mRNA-splicing factor cwf24 (533 aa).

Polar residues predominate over residues 1–17 (MEQKNLNINQASGSKIN). The interval 1-69 (MEQKNLNINQ…MRDNIPIVSG (69 aa)) is disordered. The span at 27-43 (SRRRHRPRQGLKRKKGF) shows a compositional bias: basic residues. The segment at 184 to 212 (DYQPDVCKDYKLTGYCGYGDTCKFLHMRE) adopts a C3H1-type zinc-finger fold. The RING-type zinc-finger motif lies at 254 to 292 (CLICKKDYRSPIATTCGHHFCEQCAITRYRKTPTCIQCG). One can recognise an N-acetyltransferase domain in the interval 379–524 (YFIREITESN…SAFYMVCPLS (146 aa)).

This sequence belongs to the CWC24 family. In terms of assembly, belongs to the 40S cdc5-associated complex (or cwf complex), a spliceosome sub-complex reminiscent of a late-stage spliceosome composed of the U2, U5 and U6 snRNAs and at least brr2, cdc5, cwf2/prp3, cwf3/syf1, cwf4/syf3, cwf5/ecm2, spp42/cwf6, cwf7/spf27, cwf8, cwf9, cwf10, cwf11, cwf12, prp45/cwf13, cwf14, cwf15, cwf16, cwf17, cwf18, cwf19, cwf20, cwf21, cwf22, cwf23, cwf24, cwf25, cwf26, cyp7/cwf27, cwf28, cwf29/ist3, lea1, msl1, prp5/cwf1, prp10, prp12/sap130, prp17, prp22, sap61, sap62, sap114, sap145, slu7, smb1, smd1, smd3, smf1, smg1 and syf2.

It localises to the nucleus. Functionally, involved in mRNA splicing. In Schizosaccharomyces pombe (strain 972 / ATCC 24843) (Fission yeast), this protein is Pre-mRNA-splicing factor cwf24 (cwf24).